The chain runs to 593 residues: Aspartate--tRNA ligase (593 aa).

Glu-173 contributes to the L-aspartate binding site. Residues 197–200 (QLFK) form an aspartate region. Position 219 (Arg-219) interacts with L-aspartate. Residues 219-221 (RDE) and Gln-228 contribute to the ATP site. His-449 provides a ligand contact to L-aspartate. Residue Glu-483 coordinates ATP. An L-aspartate-binding site is contributed by Arg-490. 535–538 (GLDR) contributes to the ATP binding site.

The protein belongs to the class-II aminoacyl-tRNA synthetase family. Type 1 subfamily. In terms of assembly, homodimer.

The protein resides in the cytoplasm. The catalysed reaction is tRNA(Asp) + L-aspartate + ATP = L-aspartyl-tRNA(Asp) + AMP + diphosphate. Functionally, catalyzes the attachment of L-aspartate to tRNA(Asp) in a two-step reaction: L-aspartate is first activated by ATP to form Asp-AMP and then transferred to the acceptor end of tRNA(Asp). In Shewanella piezotolerans (strain WP3 / JCM 13877), this protein is Aspartate--tRNA ligase.